The primary structure comprises 138 residues: Transcription antitermination protein NusB (138 aa).

The protein belongs to the NusB family.

Its function is as follows. Involved in transcription antitermination. Required for transcription of ribosomal RNA (rRNA) genes. Binds specifically to the boxA antiterminator sequence of the ribosomal RNA (rrn) operons. The chain is Transcription antitermination protein NusB from Leptospira interrogans serogroup Icterohaemorrhagiae serovar copenhageni (strain Fiocruz L1-130).